The primary structure comprises 907 residues: HMG box transcription factor BBX (907 aa).

The span at 1–19 (MKGSNRNKDHSTEGEGDGK) shows a compositional bias: basic and acidic residues. Disordered regions lie at residues 1–24 (MKGS…PKRK), 37–80 (LDFS…EQRA), 152–185 (TTNK…PTPK), and 220–242 (TPEA…RQKS). 2 stretches are compositionally biased toward acidic residues: residues 39-52 (FSEE…EEDI) and 61-75 (DGLE…DDES). Residues 80–148 (ARRPMNAFLL…AFMKANPGYR (69 aa)) constitute a DNA-binding region (HMG box). A compositionally biased stretch (polar residues) spans 152–164 (TTNKPVKSPTPTV). The residue at position 242 (Ser242) is a Phosphoserine. Lys384 participates in a covalent cross-link: Glycyl lysine isopeptide (Lys-Gly) (interchain with G-Cter in SUMO2). 3 disordered regions span residues 435–483 (IIED…DIES), 495–612 (DWGV…SERS), and 628–672 (TSLR…KKFK). Residues 447 to 457 (KIKKKKKKNKL) show a composition bias toward basic residues. Phosphoserine is present on residues Ser476 and Ser483. Composition is skewed to basic and acidic residues over residues 496–506 (WGVDKLGETPR) and 534–550 (KKVS…ESRP). A Glycyl lysine isopeptide (Lys-Gly) (interchain with G-Cter in SUMO2) cross-link involves residue Lys571. Residues 591-612 (KPEDSDCHRKTETCGSRKSERS) are compositionally biased toward basic and acidic residues. The segment covering 656 to 668 (ESWTFNQSGTSGS) has biased composition (polar residues). Lys693 is covalently cross-linked (Glycyl lysine isopeptide (Lys-Gly) (interchain with G-Cter in SUMO2)). Phosphoserine is present on Ser701. Disordered regions lie at residues 708–736 (KCVS…SGDK), 769–854 (NALS…SSTP), and 877–907 (VHRG…CADQ). The segment covering 723-732 (SSESTKTSKG) has biased composition (low complexity). The span at 772–783 (SIPNTPEPTTMQ) shows a compositional bias: polar residues. Ser789 bears the Phosphoserine mark. Residues 790 to 801 (QKRKARKTKITH) are compositionally biased toward basic residues. Ser811 carries the post-translational modification Phosphoserine.

The protein resides in the nucleus. Transcription factor that is necessary for cell cycle progression from G1 to S phase. The sequence is that of HMG box transcription factor BBX (Bbx) from Mus musculus (Mouse).